We begin with the raw amino-acid sequence, 396 residues long: Imidazolonepropionase (396 aa).

Fe(3+) contacts are provided by His-69 and His-71. Residues His-69 and His-71 each contribute to the Zn(2+) site. Residues Arg-78, Tyr-136, and His-163 each contribute to the 4-imidazolone-5-propanoate site. Tyr-136 lines the N-formimidoyl-L-glutamate pocket. His-224 contacts Fe(3+). Position 224 (His-224) interacts with Zn(2+). Gln-227 contributes to the 4-imidazolone-5-propanoate binding site. Asp-298 serves as a coordination point for Fe(3+). Asp-298 is a Zn(2+) binding site. The N-formimidoyl-L-glutamate site is built by Asn-300 and Gly-302. 4-imidazolone-5-propanoate is bound at residue Thr-303.

The protein belongs to the metallo-dependent hydrolases superfamily. HutI family. The cofactor is Zn(2+). Fe(3+) serves as cofactor.

The protein localises to the cytoplasm. It catalyses the reaction 4-imidazolone-5-propanoate + H2O = N-formimidoyl-L-glutamate. Its pathway is amino-acid degradation; L-histidine degradation into L-glutamate; N-formimidoyl-L-glutamate from L-histidine: step 3/3. Its function is as follows. Catalyzes the hydrolytic cleavage of the carbon-nitrogen bond in imidazolone-5-propanoate to yield N-formimidoyl-L-glutamate. It is the third step in the universal histidine degradation pathway. The protein is Imidazolonepropionase of Cutibacterium acnes (strain DSM 16379 / KPA171202) (Propionibacterium acnes).